The primary structure comprises 195 residues: Large ribosomal subunit protein bL32m (195 aa).

Residues Cys95, Cys98, Cys108, and Cys111 each coordinate Zn(2+).

It belongs to the bacterial ribosomal protein bL32 family. In terms of assembly, component of the mitochondrial large ribosomal subunit (mt-LSU).

The protein localises to the mitochondrion. In terms of biological role, component of the mitochondrial large ribosomal subunit (mt-LSU). The mitochondrial ribosome (mitoribosome) is a large ribonucleoprotein complex responsible for the synthesis of proteins inside mitochondria. The sequence is that of Large ribosomal subunit protein bL32m (mRpL32) from Drosophila melanogaster (Fruit fly).